Reading from the N-terminus, the 176-residue chain is Ribosome maturation factor RimP (176 aa).

A disordered region spans residues leucine 143–isoleucine 176.

It belongs to the RimP family.

Its subcellular location is the cytoplasm. Its function is as follows. Required for maturation of 30S ribosomal subunits. In Chlorobium luteolum (strain DSM 273 / BCRC 81028 / 2530) (Pelodictyon luteolum), this protein is Ribosome maturation factor RimP.